Reading from the N-terminus, the 348-residue chain is Mannonate dehydratase (348 aa).

This sequence belongs to the mannonate dehydratase family. Fe(2+) serves as cofactor. Requires Mn(2+) as cofactor.

The catalysed reaction is D-mannonate = 2-dehydro-3-deoxy-D-gluconate + H2O. Its pathway is carbohydrate metabolism; pentose and glucuronate interconversion. Its function is as follows. Catalyzes the dehydration of D-mannonate. The polypeptide is Mannonate dehydratase (Streptococcus agalactiae serotype Ia (strain ATCC 27591 / A909 / CDC SS700)).